A 496-amino-acid chain; its full sequence is Neuronal acetylcholine receptor subunit beta-4 (496 aa).

The N-terminal stretch at 1-19 is a signal peptide; the sequence is MRSALPLVLFSLVALCGRG. Residues 20–236 lie on the Extracellular side of the membrane; it reads DCRVANAEEK…IIKRKPLFYT (217 aa). N-linked (GlcNAc...) asparagine glycosylation is found at asparagine 36, asparagine 93, asparagine 138, and asparagine 166. A disulfide bridge links cysteine 153 with cysteine 167. A helical membrane pass occupies residues 237-257; that stretch reads INLIIPCVLITSLAILVFYLP. Over 258-265 the chain is Cytoplasmic; sequence SDCGEKMT. Glutamate 262 provides a ligand contact to Na(+). A helical membrane pass occupies residues 266–286; that stretch reads LCISVLLALTVFLLLISKIVP. At 287–298 the chain is on the extracellular side; it reads PTSLNVPLIGKY. The chain crosses the membrane as a helical span at residues 299–319; the sequence is LMFTMVLVTFSIVTSVCVLNV. The Cytoplasmic segment spans residues 320-464; sequence HHRSPSTHTM…WKYVAMVVDR (145 aa). The helical transmembrane segment at 465-485 threads the bilayer; sequence LFLWVFVVVCVLGTVGLFLPP. Residues 486–496 lie on the Extracellular side of the membrane; sequence LFQTHTPSEEP.

Belongs to the ligand-gated ion channel (TC 1.A.9) family. Acetylcholine receptor (TC 1.A.9.1) subfamily. Beta-4/CHRNB4 sub-subfamily. As to quaternary structure, neuronal AChR is composed of two different types of subunits: alpha and beta. CHRNB4/Beta-4 subunit can be combined to CHRNA2/alpha-2, CHRNA3/alpha-3 or CHRNA4/alpha-4, CHRNA5/alpha-5 and CHRNB3/beta-3 to give rise to functional receptors. Forms stoichiometries such as (CHRNA3)2:(CHRNB4)3 or (CHRNA3:CHRNB4)2:CHRNB3. Interacts with RIC3; which is required for proper folding and assembly. Interacts with LYPD6.

It is found in the synaptic cell membrane. Its subcellular location is the cell membrane. It carries out the reaction Ca(2+)(in) = Ca(2+)(out). The enzyme catalyses K(+)(in) = K(+)(out). It catalyses the reaction Na(+)(in) = Na(+)(out). Its function is as follows. Component of neuronal acetylcholine receptors (nAChRs) that function as pentameric, ligand-gated cation channels with high calcium permeability among other activities. nAChRs are excitatory neurotrasnmitter receptors formed by a collection of nAChR subunits known to mediate synaptic transmission in the nervous system and the neuromuscular junction. Each nAchR subunit confers differential attributes to channel properties, including activation, deactivation and desensitization kinetics, pH sensitivity, cation permeability, and binding to allosteric modulators. CHRNB4 forms heteropentameric neuronal acetylcholine receptors with CHRNA2, CHRNA3 and CHRNA4, as well as CHRNA5 and CHRNB3 as accesory subunits. CHRNA3:CHRNB4 being predominant in neurons of the autonomic ganglia, it is known as ganglionic nicotinic receptor. CHRNA3:CHRNB4 or CHRNA3:CHRNA5:CHRNB4 play also an important role in the habenulo-interpeduncular tract, modulating the mesolimbic dopamine system and affecting reward circuits and addiction. Hypothalamic CHRNA3:CHRNB4 nAChR activation by nicotine leads to activation of POMC neurons and a decrease in food intake. This chain is Neuronal acetylcholine receptor subunit beta-4 (CHRNB4), found in Bos taurus (Bovine).